Consider the following 325-residue polypeptide: NADH-quinone oxidoreductase subunit H (325 aa).

A run of 9 helical transmembrane segments spans residues 11-31 (ILLS…CGAF), 50-69 (NRVG…KMFF), 81-101 (VIFT…FAIV), 114-134 (IGIL…LFAG), 154-174 (VSYE…AGSF), 186-206 (LWNV…GVAV), 237-257 (FFVG…TLFF), 265-285 (LPPF…FILI), and 304-324 (VCLP…LWQA).

The protein belongs to the complex I subunit 1 family. As to quaternary structure, NDH-1 is composed of 13 different subunits. Subunits NuoA, H, J, K, L, M, N constitute the membrane sector of the complex.

It is found in the cell inner membrane. It catalyses the reaction a quinone + NADH + 5 H(+)(in) = a quinol + NAD(+) + 4 H(+)(out). Functionally, NDH-1 shuttles electrons from NADH, via FMN and iron-sulfur (Fe-S) centers, to quinones in the respiratory chain. The immediate electron acceptor for the enzyme in this species is believed to be ubiquinone. Couples the redox reaction to proton translocation (for every two electrons transferred, four hydrogen ions are translocated across the cytoplasmic membrane), and thus conserves the redox energy in a proton gradient. This subunit may bind ubiquinone. This Salmonella arizonae (strain ATCC BAA-731 / CDC346-86 / RSK2980) protein is NADH-quinone oxidoreductase subunit H.